The sequence spans 704 residues: Tryptophan synthase (704 aa).

Residues 1–292 (MEAIKKVFEQ…QLTPNAETAK (292 aa)) are tryptophan synthase alpha chain. Residues glutamate 49 and aspartate 60 each act as proton acceptor in the active site. The tract at residues 293-704 (GVENILPARF…HVSSNAIPSK (412 aa)) is tryptophan synthase beta chain. N6-(pyridoxal phosphate)lysine is present on lysine 380.

This sequence in the N-terminal section; belongs to the TrpA family. In the C-terminal section; belongs to the TrpB family. The cofactor is pyridoxal 5'-phosphate.

The catalysed reaction is (1S,2R)-1-C-(indol-3-yl)glycerol 3-phosphate + L-serine = D-glyceraldehyde 3-phosphate + L-tryptophan + H2O. It functions in the pathway amino-acid biosynthesis; L-tryptophan biosynthesis; L-tryptophan from chorismate: step 5/5. The polypeptide is Tryptophan synthase (TRP-1) (Coprinopsis cinerea (strain Okayama-7 / 130 / ATCC MYA-4618 / FGSC 9003) (Inky cap fungus)).